Reading from the N-terminus, the 153-residue chain is Putative nuclear shuttle protein (153 aa).

It belongs to the nanoviridae nuclear shuttle protein family.

It is found in the host nucleus. It localises to the host cytoplasm. In terms of biological role, putative nuclear shuttle protein. This is Putative nuclear shuttle protein (DNA-N) from Cicer arietinum (Chickpea).